The chain runs to 249 residues: uncharacterized protein (249 aa).

Residue 11-34 (IFGGRSQIGGELARRLAAGATMVL) participates in NADP(+) binding. Ser142 lines the substrate pocket. Tyr155 serves as the catalytic Proton acceptor.

This sequence belongs to the short-chain dehydrogenases/reductases (SDR) family.

This is an uncharacterized protein from Mycobacterium tuberculosis (strain CDC 1551 / Oshkosh).